A 97-amino-acid chain; its full sequence is Citrate lyase acyl carrier protein (97 aa).

S14 carries the post-translational modification O-(phosphoribosyl dephospho-coenzyme A)serine.

Belongs to the CitD family. Oligomer with a subunit composition of (alpha,beta,gamma)6.

The protein localises to the cytoplasm. Its function is as follows. Covalent carrier of the coenzyme of citrate lyase. In Lactobacillus helveticus (strain DPC 4571), this protein is Citrate lyase acyl carrier protein.